The following is a 590-amino-acid chain: Leucine-rich repeat transmembrane neuronal protein 4 (590 aa).

A signal peptide spans 1–30 (MGFRLITQLKGMSVLLVLFPTLLLVMLTGA). One can recognise an LRRNT domain in the interval 31-59 (QRACPKNCRCDGKIVYCESHAFADIPENI). The Extracellular segment spans residues 31–424 (QRACPKNCRC…HEYEHVSFHK (394 aa)). A glycan (N-linked (GlcNAc...) asparagine) is linked at asparagine 58. 10 LRR repeats span residues 60–83 (SGGS…QFAG), 84–107 (LNQL…AFQG), 108–131 (IRRL…TFHP), 132–155 (VPNL…QFKG), 157–179 (RKLI…VFQD), 180–203 (CRNL…AFAG), 205–227 (LKLK…HFPR), 228–251 (LFNL…LTWT), 252–275 (WSSL…TFKC), and 276–299 (LPNL…TVNA). The N-linked (GlcNAc...) asparagine glycan is linked to asparagine 126. N-linked (GlcNAc...) asparagine glycosylation is present at asparagine 291. The LRRCT domain occupies 311 to 362 (NMWECSRSICPLFYWLKNFKGNKESTMICAGPKHIQGEKVSDAVETYNICSD). The helical transmembrane segment at 425–445 (IIAGSVALFLSVAMILLVIYV) threads the bilayer. Residues 446 to 590 (SWKRYPASMK…PAIYLERITN (145 aa)) are Cytoplasmic-facing.

It belongs to the LRRTM family. As to quaternary structure, peripherally associated with AMPAR complex. AMPAR complex consists of an inner core made of 4 pore-forming GluA/GRIA proteins (GRIA1, GRIA2, GRIA3 and GRIA4) and 4 major auxiliary subunits arranged in a twofold symmetry. One of the two pairs of distinct binding sites is occupied either by CNIH2, CNIH3 or CACNG2, CACNG3. The other harbors CACNG2, CACNG3, CACNG4, CACNG8 or GSG1L. This inner core of AMPAR complex is complemented by outer core constituents binding directly to the GluA/GRIA proteins at sites distinct from the interaction sites of the inner core constituents. Outer core constituents include at least PRRT1, PRRT2, CKAMP44/SHISA9, FRRS1L and NRN1. The proteins of the inner and outer core serve as a platform for other, more peripherally associated AMPAR constituents, including LRRTM4. Alone or in combination, these auxiliary subunits control the gating and pharmacology of the AMPAR complex and profoundly impact their biogenesis and protein processing. Expressed in the brain (at protein level).

It is found in the cell membrane. The protein localises to the postsynaptic cell membrane. May play a role in the development and maintenance of the nervous system. Exhibits strong synaptogenic activity, restricted to excitatory presynaptic differentiation. In Rattus norvegicus (Rat), this protein is Leucine-rich repeat transmembrane neuronal protein 4 (Lrrtm4).